The chain runs to 504 residues: Fumitremorgin C monooxygenase (504 aa).

Residues Leu9–Phe29 traverse the membrane as a helical segment. Cys442 lines the heme pocket.

Belongs to the cytochrome P450 family. Heme serves as cofactor.

The protein localises to the membrane. The catalysed reaction is fumitremorgin C + 2 reduced [NADPH--hemoprotein reductase] + 2 O2 = 12alpha,13alpha-dihydroxyfumitremorgin C + 2 oxidized [NADPH--hemoprotein reductase] + 2 H2O + 2 H(+). The protein operates within mycotoxin biosynthesis. Functionally, cytochrome P450 monooxygenase; part of the gene cluster that mediates the biosynthesis of fumitremorgins, indole alkaloids that carry not only intriguing chemical structures, but also interesting biological and pharmacological activities. The biosynthesis of fumitremorgin-type alkaloids begins by condensation of the two amino acids L-tryptophan and L-proline to brevianamide F, catalyzed by the non-ribosomal peptide synthetase ftmPS/ftmA. Brevianamide F is then prenylated by the prenyltransferase ftmPT1/ftmB in the presence of dimethylallyl diphosphate, resulting in the formation of tryprostatin B. The three cytochrome P450 monooxygenases, ftmP450-1/ftmC, ftmP450-2/ftmE and ftmP450-3/FtmG, are responsible for the conversion of tryprostatin B to 6-hydroxytryprostatin B, tryprostatin A to fumitremorgin C and fumitremorgin C to 12,13-dihydroxyfumitremorgin C, respectively. The putative methyltransferase ftmMT/ftmD is expected for the conversion of 6-hydroxytryprostatin B to tryprostatin A. FtmPT2/FtmH catalyzes the prenylation of 12,13-dihydroxyfumitre-morgin C in the presence of dimethylallyl diphosphate, resulting in the formation of fumitremorgin B. Fumitremorgin B is further converted to verruculogen by ftmOx1/ftmF via the insertion of an endoperoxide bond between the two prenyl moieties. Finally, verruculogen is further converted to fumitremorgin A by the verruculogen prenyltransferase ftmPT3. This is Fumitremorgin C monooxygenase from Neosartorya fischeri (strain ATCC 1020 / DSM 3700 / CBS 544.65 / FGSC A1164 / JCM 1740 / NRRL 181 / WB 181) (Aspergillus fischerianus).